The sequence spans 481 residues: MTQYTLKQASVLLQSKQISAVELASAYLAAIAEKNPALNGYITIDQDKTLAEARAADERIAQGNASALTGIPVAYKDIFCQTGWRSACASKMLDNFISPYTATVVQKLLDEGMVTLGRTNMDEFAMGSTNENSFYGAAKNPWNPEHVPGGSSGGSAAVVAARLAPAALGSDTGGSIRQPASHCGITGIKPTYGTVSRFGMVAYASSFDQAGPMAQTAEDCAILLNAMAGFDPKDSTSLEREKEDYTRDLNQPLKGLKIGLPKEYFGEGNSADVLTALQNTIDLLKAQGAELIEVSLPQTKLSIPAYYVLASAEASTNLSRYDGVRYGHRAAQFSDLEEMYGKTRAEGFGSEVKRRIMIGTYVLSHGYYDAYYLKAQKLRRLVADDFQTAFARCDLILAPTAPSAAPKIGADASPVETYLSDIYTIAVNLAGLPALTLPAGFSSGGLPIGVQLIGNYFSEAKILGAAHQIQLNSDWHGKRPE.

Catalysis depends on charge relay system residues Lys76 and Ser151. Catalysis depends on Ser175, which acts as the Acyl-ester intermediate.

It belongs to the amidase family. GatA subfamily. In terms of assembly, heterotrimer of A, B and C subunits.

The catalysed reaction is L-glutamyl-tRNA(Gln) + L-glutamine + ATP + H2O = L-glutaminyl-tRNA(Gln) + L-glutamate + ADP + phosphate + H(+). Allows the formation of correctly charged Gln-tRNA(Gln) through the transamidation of misacylated Glu-tRNA(Gln) in organisms which lack glutaminyl-tRNA synthetase. The reaction takes place in the presence of glutamine and ATP through an activated gamma-phospho-Glu-tRNA(Gln). This Neisseria meningitidis serogroup A / serotype 4A (strain DSM 15465 / Z2491) protein is Glutamyl-tRNA(Gln) amidotransferase subunit A.